The chain runs to 910 residues: E3 ubiquitin-protein ligase HUL5 (910 aa).

The residue at position 1 (Met-1) is an N-acetylmethionine. The disordered stretch occupies residues 1–25 (MLNFTGQTRRRNVNLGNRTRNSKKD). The 101-residue stretch at 810-910 (YGGYKEEDQT…INSGARFDLS (101 aa)) folds into the HECT domain. Cys-878 (glycyl thioester intermediate) is an active-site residue.

It belongs to the UBE3C family. In terms of assembly, interacts with 19S proteasomes.

It is found in the cytoplasm. It localises to the cytosol. The protein resides in the nucleus. The enzyme catalyses S-ubiquitinyl-[E2 ubiquitin-conjugating enzyme]-L-cysteine + [acceptor protein]-L-lysine = [E2 ubiquitin-conjugating enzyme]-L-cysteine + N(6)-ubiquitinyl-[acceptor protein]-L-lysine.. Its pathway is protein modification; protein ubiquitination. Non-essential E3 ubiquitin-protein ligase that specifically catalyzes 'Lys-29'- and 'Lys-48'-linked polyubiquitin chains. Accepts ubiquitin from an E2 ubiquitin-conjugating enzyme in the form of a thioester and then directly transfers the ubiquitin to targeted substrates. Associates with the proteasome and promotes elongation of ubiquitin chains on substrates bound to the proteasome. Elongation of ubiquitin chains on substrates bound to the proteasome promotes proteasomal processivity. Also promotes ubiquitin elongation of 26S proteasome subunit RPN10. Involved in the stress response required to maintain cell fitness following heat-shock: acts by mediating ubiquitination of cytosolic misfolded proteins, leading to their subsequent degradation. The sequence is that of E3 ubiquitin-protein ligase HUL5 from Saccharomyces cerevisiae (strain ATCC 204508 / S288c) (Baker's yeast).